Consider the following 58-residue polypeptide: VIEPDCKKYEGKKCPPDIALVCGTNGREYYNECALCVFIRDSTLKADKAIKIKKWGKC.

One can recognise a Kazal-like domain in the interval 1-58 (VIEPDCKKYEGKKCPPDIALVCGTNGREYYNECALCVFIRDSTLKADKAIKIKKWGKC). Intrachain disulfides connect C6–C36, C14–C33, and C22–C58.

In terms of tissue distribution, skin.

Its subcellular location is the secreted. In terms of biological role, may have a role in mucosal defense against microbes by interacting directly with their membranes. This Phyllomedusa sauvagei (Sauvage's leaf frog) protein is Proteinase inhibitor PSKP-2.